The following is a 186-amino-acid chain: Fucolectin-6 (186 aa).

A signal peptide spans 1–32 (MKTCNLTDRMKVKMIMLLFQILAISTLQSVSA). Residues 40–186 (QENVAVRGKA…VEVNAMLPAN (147 aa)) are F5/8 type C-like. Asn-67, Asp-70, Asn-72, and Ser-81 together coordinate Ca(2+). 3 disulfide bridges follow: Cys-82–Cys-175, Cys-114–Cys-115, and Cys-137–Cys-153. Positions 84 and 111 each coordinate alpha-L-fucose. The Cell attachment site signature appears at 111-113 (RGD). Arg-118 contacts alpha-L-fucose. Residues Cys-175 and Glu-176 each coordinate Ca(2+).

This sequence belongs to the fucolectin family. As to quaternary structure, homotrimer. In terms of tissue distribution, gill mucous cells.

It localises to the secreted. Functionally, acts as a defensive agent. Recognizes blood group fucosylated oligosaccharides including A, B, H and Lewis B-type antigens. Does not recognize Lewis A antigen and has low affinity for monovalent haptens. This is Fucolectin-6 from Anguilla japonica (Japanese eel).